Reading from the N-terminus, the 131-residue chain is Small ribosomal subunit protein uS8 (131 aa).

It belongs to the universal ribosomal protein uS8 family. As to quaternary structure, part of the 30S ribosomal subunit. Contacts proteins S5 and S12.

Functionally, one of the primary rRNA binding proteins, it binds directly to 16S rRNA central domain where it helps coordinate assembly of the platform of the 30S subunit. In Acidovorax sp. (strain JS42), this protein is Small ribosomal subunit protein uS8.